The sequence spans 301 residues: tRNA pseudouridine synthase B (301 aa).

The Nucleophile role is filled by aspartate 47.

The protein belongs to the pseudouridine synthase TruB family. Type 1 subfamily.

The catalysed reaction is uridine(55) in tRNA = pseudouridine(55) in tRNA. Its function is as follows. Responsible for synthesis of pseudouridine from uracil-55 in the psi GC loop of transfer RNAs. The protein is tRNA pseudouridine synthase B of Cereibacter sphaeroides (strain ATCC 17023 / DSM 158 / JCM 6121 / CCUG 31486 / LMG 2827 / NBRC 12203 / NCIMB 8253 / ATH 2.4.1.) (Rhodobacter sphaeroides).